Here is a 201-residue protein sequence, read N- to C-terminus: Ras-related protein Rab-9A (201 aa).

Residue Ala-2 is modified to N-acetylalanine. Gly-17 serves as a coordination point for GDP. Gly-17, Val-18, Gly-19, Lys-20, Ser-21, Ser-22, Thr-34, His-38, and Thr-39 together coordinate GTP. GDP contacts are provided by Gly-19, Lys-20, Ser-21, and Ser-22. Residue Ser-21 coordinates Mg(2+). The Switch 1 motif lies at 31–42; the sequence is KFDTQLFHTIGV. Thr-39 and Asp-62 together coordinate Mg(2+). The Switch 2 motif lies at 64–78; that stretch reads AGQERFRSLRTPFYR. GTP is bound by residues Gly-65, Asn-124, Lys-125, Asp-127, Ala-155, and Lys-156. 5 residues coordinate GDP: Asn-124, Lys-125, Asp-127, Ala-155, and Lys-156. Ser-179 carries the phosphoserine modification. At Thr-187 the chain carries Phosphothreonine. S-geranylgeranyl cysteine attachment occurs at residues Cys-200 and Cys-201.

The protein belongs to the small GTPase superfamily. Rab family. In terms of assembly, interacts (preferentially in its GTP-bound form) with GCC2 (via its GRIP domain). Interacts (GTP-bound form) with SGSM1; the GDP-bound form has much lower affinity for SGSM1. Interacts with SGSM2. The GTP-bound form but not the GDP-bound form interacts with HPS4 and BLOC-3 complex (heterodimer of HPS1 and HPS4) but does not interact with HPS1 alone. Interacts (GTP-bound form) with NDE1; two RAB9A-GTP molecules lie on the opposite sides of the NDE1 homodimer; the interaction leads to RAB9A-dynein motor tethering. Interacts (GTP-bound form) with NDEL1. Mg(2+) serves as cofactor.

The protein localises to the cell membrane. The protein resides in the endoplasmic reticulum membrane. Its subcellular location is the golgi apparatus membrane. It localises to the late endosome. It is found in the cytoplasmic vesicle. The protein localises to the phagosome membrane. The protein resides in the phagosome. Its subcellular location is the cytoplasmic vesicle membrane. It localises to the melanosome. It catalyses the reaction GTP + H2O = GDP + phosphate + H(+). With respect to regulation, regulated by guanine nucleotide exchange factors (GEFs) which promote the exchange of bound GDP for free GTP. Regulated by GTPase activating proteins (GAPs) which increase the GTP hydrolysis activity. Inhibited by GDP dissociation inhibitors (GDIs). The small GTPases Rab are key regulators of intracellular membrane trafficking, from the formation of transport vesicles to their fusion with membranes. Rabs cycle between an inactive GDP-bound form and an active GTP-bound form that is able to recruit to membranes different sets of downstream effectors directly responsible for vesicle formation, movement, tethering and fusion. RAB9A is involved in the transport of proteins between the endosomes and the trans-Golgi network (TGN). Specifically uses NDE1/NDEL1 as an effector to interact with the dynein motor complex in order to control retrograde trafficking of RAB9-associated late endosomes to the TGN. Involved in the recruitment of SGSM2 to melanosomes and is required for the proper trafficking of melanogenic enzymes TYR, TYRP1 and DCT/TYRP2 to melanosomes in melanocytes. This is Ras-related protein Rab-9A from Homo sapiens (Human).